The following is a 448-amino-acid chain: Bud neck protein 5 (448 aa).

Disordered stretches follow at residues 63-103 (SGND…DPSQ), 171-211 (DDEW…TLGG), and 242-352 (GDNE…SSPI). Phosphoserine occurs at positions 70 and 179. Residues 171–180 (DDEWEDEKSD) are compositionally biased toward acidic residues. The segment covering 181–191 (VEEGRVDKGTE) has biased composition (basic and acidic residues). Serine 194 is subject to Phosphoserine. Residues 245-262 (EYNHESSRLADQTPHDDN) show a composition bias toward basic and acidic residues. Threonine 257 is modified (phosphothreonine). Over residues 264 to 281 (ENCPNRSGGSTPLDSQTK) the composition is skewed to polar residues. 2 positions are modified to phosphoserine: serine 270 and serine 273. At threonine 274 the chain carries Phosphothreonine. The segment covering 325–343 (SVSSNSNSRNGSRKSSLNK) has biased composition (low complexity). Phosphoserine occurs at positions 332 and 340. Residue tyrosine 344 is modified to Phosphotyrosine. 2 positions are modified to phosphoserine: serine 346 and serine 350.

In terms of assembly, component of the GIN4 complex composed of at least BNI5, CDC3, CDC10, CDC11, CDC12, GIN4, NAP1 and SHS1. Interacts directly with CDC11, CDC12 and SHS1.

The protein localises to the cytoplasm. It is found in the bud neck. Required for normal septin function and cytokinesis. Its recruitment to the bud neck by CDCd11 and SHS1 ensures efficient localization at the bud neck of MYO1, the type II myosin of the actomyosin contractile ring. The polypeptide is Bud neck protein 5 (Saccharomyces cerevisiae (strain ATCC 204508 / S288c) (Baker's yeast)).